A 388-amino-acid polypeptide reads, in one-letter code: MISKKLIIELLKQLISFKSVTPNDNGAIDFITNLLVKQGFKVYVKEFGQEYKVKNLYGYFGNGQPNICFAGHIDVVPAGFIEQWKYPPFCATQYKDKIYGRGVVDMKGAISAMLSSVFCFIDNNHDFNGTISFLITADEEGEALFGTKKMLEWIYRQGHKIDFTILGEPTCTDKIGDTIKIGRRGSINFDLKVFGKQGHVAYPHLAINPNHLIVKILNRLIAYKIDEGNEFFAPSNLEIVSIDTNNNITNIIPEIAKSKFNIRFNDIHTNERLLEIVKKTIEQFTTNYDLQSSCRSRPFLAKMSPYIFSFKELVHKVTKIKPEFSTSGGTSDAYFFKDYSPIVEFGLLNTMAHKINEYCLINDLQTLCRVYYNALCLFLMSNSKFRTN.

Histidine 72 contacts Zn(2+). Aspartate 74 is a catalytic residue. Aspartate 105 contributes to the Zn(2+) binding site. The active-site Proton acceptor is glutamate 139. Positions 140, 168, and 353 each coordinate Zn(2+).

The protein belongs to the peptidase M20A family. DapE subfamily. As to quaternary structure, homodimer. The cofactor is Zn(2+). Requires Co(2+) as cofactor.

The catalysed reaction is N-succinyl-(2S,6S)-2,6-diaminopimelate + H2O = (2S,6S)-2,6-diaminopimelate + succinate. It participates in amino-acid biosynthesis; L-lysine biosynthesis via DAP pathway; LL-2,6-diaminopimelate from (S)-tetrahydrodipicolinate (succinylase route): step 3/3. Functionally, catalyzes the hydrolysis of N-succinyl-L,L-diaminopimelic acid (SDAP), forming succinate and LL-2,6-diaminopimelate (DAP), an intermediate involved in the bacterial biosynthesis of lysine and meso-diaminopimelic acid, an essential component of bacterial cell walls. This chain is Succinyl-diaminopimelate desuccinylase, found in Orientia tsutsugamushi (strain Boryong) (Rickettsia tsutsugamushi).